Reading from the N-terminus, the 136-residue chain is MSQLVYFSSSSENTQRFIERLGMPAVRIPLNERERIQVDEPYILIVPSYGGGGTAGAVPRQVIRFLNDEHNRALLRGVIASGNRNFGEAYGRAGDVIARKCGVPWLYRFELMGTQSDIENVRKGVTEFWQRQPQNA.

This sequence belongs to the NrdI family.

Functionally, probably involved in ribonucleotide reductase function. This is Protein NrdI from Shigella boydii serotype 4 (strain Sb227).